Consider the following 92-residue polypeptide: Small ribosomal subunit protein uS19 (92 aa).

This sequence belongs to the universal ribosomal protein uS19 family.

Protein S19 forms a complex with S13 that binds strongly to the 16S ribosomal RNA. The polypeptide is Small ribosomal subunit protein uS19 (Bradyrhizobium diazoefficiens (strain JCM 10833 / BCRC 13528 / IAM 13628 / NBRC 14792 / USDA 110)).